The sequence spans 256 residues: Trypsin, alkaline A (256 aa).

The N-terminal stretch at 1 to 17 is a signal peptide; sequence MRLFLALLALGFAAVAA. Residues 18 to 24 constitute a propeptide, activation peptide; sequence VPAYPQR. A Peptidase S1 domain is found at 25 to 256; it reads IVGGSTTTIQ…RFANWIRNNS (232 aa). Cysteines 55 and 71 form a disulfide. Catalysis depends on charge relay system residues His-70 and Asp-115. 2 cysteine pairs are disulfide-bonded: Cys-180/Cys-197 and Cys-209/Cys-233. The active-site Charge relay system is the Ser-213.

Belongs to the peptidase S1 family. Midgut.

It is found in the secreted. The protein resides in the extracellular space. It carries out the reaction Preferential cleavage: Arg-|-Xaa, Lys-|-Xaa.. This is Trypsin, alkaline A from Manduca sexta (Tobacco hawkmoth).